The chain runs to 341 residues: Phenylalanine--tRNA ligase alpha subunit (341 aa).

Glutamate 256 contributes to the Mg(2+) binding site.

The protein belongs to the class-II aminoacyl-tRNA synthetase family. Phe-tRNA synthetase alpha subunit type 1 subfamily. Tetramer of two alpha and two beta subunits. Mg(2+) serves as cofactor.

It is found in the cytoplasm. It catalyses the reaction tRNA(Phe) + L-phenylalanine + ATP = L-phenylalanyl-tRNA(Phe) + AMP + diphosphate + H(+). The polypeptide is Phenylalanine--tRNA ligase alpha subunit (Chlamydia abortus (strain DSM 27085 / S26/3) (Chlamydophila abortus)).